The chain runs to 438 residues: Aspartate--tRNA(Asp) ligase (438 aa).

Glu-170 lines the L-aspartate pocket. Residues Gln-192–Lys-195 are aspartate. Arg-214 is a binding site for L-aspartate. Residues Arg-214–Glu-216, Arg-222–Leu-224, and Glu-361 contribute to the ATP site. Glu-361 and Ser-364 together coordinate Mg(2+). Residues Ser-364 and Arg-368 each contribute to the L-aspartate site. Gly-409–Arg-412 is an ATP binding site.

The protein belongs to the class-II aminoacyl-tRNA synthetase family. Type 2 subfamily. As to quaternary structure, homodimer. The cofactor is Mg(2+).

The protein resides in the cytoplasm. The enzyme catalyses tRNA(Asp) + L-aspartate + ATP = L-aspartyl-tRNA(Asp) + AMP + diphosphate. Catalyzes the attachment of L-aspartate to tRNA(Asp) in a two-step reaction: L-aspartate is first activated by ATP to form Asp-AMP and then transferred to the acceptor end of tRNA(Asp). This is Aspartate--tRNA(Asp) ligase from Pyrococcus furiosus (strain ATCC 43587 / DSM 3638 / JCM 8422 / Vc1).